The following is a 208-amino-acid chain: Uracil phosphoribosyltransferase (208 aa).

Residues Arg-78, Arg-103, and 130–138 each bind 5-phospho-alpha-D-ribose 1-diphosphate; that span reads DPMLATGGS. Uracil is bound by residues Ile-193 and 198 to 200; that span reads GDA. Residue Asp-199 participates in 5-phospho-alpha-D-ribose 1-diphosphate binding.

It belongs to the UPRTase family. Mg(2+) is required as a cofactor.

It carries out the reaction UMP + diphosphate = 5-phospho-alpha-D-ribose 1-diphosphate + uracil. The protein operates within pyrimidine metabolism; UMP biosynthesis via salvage pathway; UMP from uracil: step 1/1. With respect to regulation, allosterically activated by GTP. Catalyzes the conversion of uracil and 5-phospho-alpha-D-ribose 1-diphosphate (PRPP) to UMP and diphosphate. This is Uracil phosphoribosyltransferase from Pectobacterium carotovorum subsp. carotovorum (strain PC1).